We begin with the raw amino-acid sequence, 444 residues long: DNA repair protein RadA (444 aa).

A C4-type zinc finger spans residues 8-25 (CSNCGNISPKWSGQCFDC). 89–96 (GDPGIGKS) contacts ATP. Positions 248-252 (KNRFG) match the RadA KNRFG motif motif. Residues 347–444 (EVYLSIAGGL…HLKDLKEIIK (98 aa)) form a lon-protease-like region.

It belongs to the RecA family. RadA subfamily.

DNA-dependent ATPase involved in processing of recombination intermediates, plays a role in repairing DNA breaks. Stimulates the branch migration of RecA-mediated strand transfer reactions, allowing the 3' invading strand to extend heteroduplex DNA faster. Binds ssDNA in the presence of ADP but not other nucleotides, has ATPase activity that is stimulated by ssDNA and various branched DNA structures, but inhibited by SSB. Does not have RecA's homology-searching function. The sequence is that of DNA repair protein RadA from Rickettsia conorii (strain ATCC VR-613 / Malish 7).